Here is a 109-residue protein sequence, read N- to C-terminus: Fluoride-specific ion channel FluC 1 (109 aa).

4 helical membrane-spanning segments follow: residues 1 to 21 (MVIV…YFFS), 29 to 49 (LPLG…VFYN), 55 to 75 (EVYA…STLN), and 87 to 107 (VFYS…FLGI). Residues Gly-66 and Thr-69 each contribute to the Na(+) site.

This sequence belongs to the fluoride channel Fluc/FEX (TC 1.A.43) family.

The protein localises to the cell membrane. It carries out the reaction fluoride(in) = fluoride(out). With respect to regulation, na(+) is not transported, but it plays an essential structural role and its presence is essential for fluoride channel function. Fluoride-specific ion channel. Important for reducing fluoride concentration in the cell, thus reducing its toxicity. This is Fluoride-specific ion channel FluC 1 from Streptococcus pneumoniae serotype 4 (strain ATCC BAA-334 / TIGR4).